Consider the following 264-residue polypeptide: Thymidylate synthase (264 aa).

Arg21 contributes to the dUMP binding site. His51 lines the (6R)-5,10-methylene-5,6,7,8-tetrahydrofolate pocket. 126–127 (RR) is a dUMP binding site. Catalysis depends on Cys146, which acts as the Nucleophile. Residues 166–169 (RSAD), Asn177, and 207–209 (HLY) contribute to the dUMP site. Asp169 contacts (6R)-5,10-methylene-5,6,7,8-tetrahydrofolate. Ala263 is a (6R)-5,10-methylene-5,6,7,8-tetrahydrofolate binding site.

It belongs to the thymidylate synthase family. Bacterial-type ThyA subfamily. In terms of assembly, homodimer.

The protein resides in the cytoplasm. It carries out the reaction dUMP + (6R)-5,10-methylene-5,6,7,8-tetrahydrofolate = 7,8-dihydrofolate + dTMP. It participates in pyrimidine metabolism; dTTP biosynthesis. Functionally, catalyzes the reductive methylation of 2'-deoxyuridine-5'-monophosphate (dUMP) to 2'-deoxythymidine-5'-monophosphate (dTMP) while utilizing 5,10-methylenetetrahydrofolate (mTHF) as the methyl donor and reductant in the reaction, yielding dihydrofolate (DHF) as a by-product. This enzymatic reaction provides an intracellular de novo source of dTMP, an essential precursor for DNA biosynthesis. The polypeptide is Thymidylate synthase (Dechloromonas aromatica (strain RCB)).